A 109-amino-acid chain; its full sequence is V-type proton ATPase 16 kDa proteolipid subunit (109 aa).

The chain crosses the membrane as a helical span at residues 1 to 20 (VPVVMAGVLGIYGLIIAVII). Over 21–39 (STGINPKAKPYYLFDGYAH) the chain is Lumenal. Residues 40 to 61 (LSSGLACGLAGLAAGMAIGIVG) traverse the membrane as a helical segment. Residues 62–73 (DAGVRANAQQPK) are Cytoplasmic-facing. A helical membrane pass occupies residues 74–99 (LFVGMILILIFAEALALYGLIVGIIL). The Lumenal segment spans residues 100-109 (SSRAGQSRAD).

The protein belongs to the V-ATPase proteolipid subunit family. As to quaternary structure, V-ATPase is a heteromultimeric enzyme composed of a peripheral catalytic V1 complex (main components: subunits A, B, C, D, E, and F) attached to an integral membrane V0 proton pore complex (main component: the proteolipid protein; which is present as a hexamer that forms the proton-conducting pore). High expression in the mesocotyl tip of etiolated seedlings compared to the base.

It is found in the vacuole membrane. Its function is as follows. Proton-conducting pore forming subunit of the membrane integral V0 complex of vacuolar ATPase. V-ATPase is responsible for acidifying a variety of intracellular compartments in eukaryotic cells. The chain is V-type proton ATPase 16 kDa proteolipid subunit from Zea mays (Maize).